The chain runs to 239 residues: Regulator of G-protein signaling 20 (239 aa).

The disordered stretch occupies residues 1-29 (MRTANGGPRARASPSASPADPGLPEGSER). The span at 8-19 (PRARASPSASPA) shows a compositional bias: low complexity. The RGS domain maps to 113–229 (SFDNLMVTPA…MNSTVYKDLL (117 aa)).

Forms a complex with G(alpha)z/i2 subunits and mu-opioid receptors; the formation of this complex results in mu-opioid receptor desensitization. Interacts with OPRM1. Post-translationally, fatty acylated. Heavily palmitoylated in the cysteine string motif. In terms of processing, N- and O-glycosylated in synapsomal membranes. Serine phosphorylated in synapsomal membranes. Post-translationally, sumoylated with SUMO1, SUMO2 and SUMO3. Sumoylation increases binding to the G-proteins, G(alpha)-i2 and G(z), and interaction with mu-opioid receptors.

It is found in the membrane. Its subcellular location is the nucleus. It localises to the cytoplasm. Functionally, inhibits signal transduction by increasing the GTPase activity of G protein alpha subunits thereby driving them into their inactive GDP-bound form. Binds selectively to G(z)-alpha and G(alpha)-i2 subunits, accelerates their GTPase activity and regulates their signaling activities. The G(z)-alpha activity is inhibited by the phosphorylation and palmitoylation of the G-protein. Negatively regulates mu-opioid receptor-mediated activation of the G-proteins. The chain is Regulator of G-protein signaling 20 (Rgs20) from Mus musculus (Mouse).